The primary structure comprises 662 residues: UvrABC system protein B (662 aa).

The Helicase ATP-binding domain maps to 31–188; that stretch reads DNIEGGEKAQ…NDLVDIQFER (158 aa). 44-51 contacts ATP; that stretch reads GATGTGKT. A Beta-hairpin motif is present at residues 97–120; sequence YYDYYQPEAYVPSSDTYIEKDSSV. The Helicase C-terminal domain occupies 435-601; it reads QIDDLLGEIN…TIKKEIRDLI (167 aa). A UVR domain is found at 626–661; the sequence is KELVKKLEKQMQEAVEVLDFELAAQIRDMMLEVKAL.

This sequence belongs to the UvrB family. As to quaternary structure, forms a heterotetramer with UvrA during the search for lesions. Interacts with UvrC in an incision complex.

It localises to the cytoplasm. The UvrABC repair system catalyzes the recognition and processing of DNA lesions. A damage recognition complex composed of 2 UvrA and 2 UvrB subunits scans DNA for abnormalities. Upon binding of the UvrA(2)B(2) complex to a putative damaged site, the DNA wraps around one UvrB monomer. DNA wrap is dependent on ATP binding by UvrB and probably causes local melting of the DNA helix, facilitating insertion of UvrB beta-hairpin between the DNA strands. Then UvrB probes one DNA strand for the presence of a lesion. If a lesion is found the UvrA subunits dissociate and the UvrB-DNA preincision complex is formed. This complex is subsequently bound by UvrC and the second UvrB is released. If no lesion is found, the DNA wraps around the other UvrB subunit that will check the other stand for damage. This Streptococcus pneumoniae (strain Hungary19A-6) protein is UvrABC system protein B.